The chain runs to 199 residues: Urease accessory protein UreG (199 aa).

8–15 serves as a coordination point for GTP; it reads GPVGSGKT.

Belongs to the SIMIBI class G3E GTPase family. UreG subfamily. As to quaternary structure, homodimer. UreH, UreF and UreG form a complex that acts as a GTP-hydrolysis-dependent molecular chaperone, activating the urease apoprotein by helping to assemble the nickel containing metallocenter of UreC. The UreE protein probably delivers the nickel.

The protein resides in the cytoplasm. Functionally, facilitates the functional incorporation of the urease nickel metallocenter. This process requires GTP hydrolysis, probably effectuated by UreG. This Helicobacter acinonychis (strain Sheeba) protein is Urease accessory protein UreG.